The primary structure comprises 222 residues: UPF0758 protein Cpar_0627 (222 aa).

The region spanning 100–222 (KIQGAQDVFE…WFSFRDHSLL (123 aa)) is the MPN domain. His171, His173, and Asp184 together coordinate Zn(2+). The short motif at 171-184 (HNHPSGDVQPSNAD) is the JAMM motif element.

This sequence belongs to the UPF0758 family.

This chain is UPF0758 protein Cpar_0627, found in Chlorobaculum parvum (strain DSM 263 / NCIMB 8327) (Chlorobium vibrioforme subsp. thiosulfatophilum).